The sequence spans 373 residues: Glycerol-3-phosphate dehydrogenase [NAD(+)] 2 (373 aa).

Phosphoserine is present on serine 15. NAD(+) is bound by residues 31-36 (GSGNWG), phenylalanine 123, lysine 146, and alanine 179. Residue lysine 146 participates in substrate binding. The Proton acceptor role is filled by lysine 236. Residues arginine 300 and glutamine 329 each coordinate NAD(+). Residue 300–301 (RN) participates in substrate binding.

This sequence belongs to the NAD-dependent glycerol-3-phosphate dehydrogenase family.

Its subcellular location is the cytoplasm. It catalyses the reaction sn-glycerol 3-phosphate + NAD(+) = dihydroxyacetone phosphate + NADH + H(+). This chain is Glycerol-3-phosphate dehydrogenase [NAD(+)] 2 (gpd2), found in Schizosaccharomyces pombe (strain 972 / ATCC 24843) (Fission yeast).